We begin with the raw amino-acid sequence, 491 residues long: FAD-dependent monooxygenase cle3 (491 aa).

E55, G69, R128, D330, and A343 together coordinate FAD. Residue N380 is glycosylated (N-linked (GlcNAc...) asparagine). Residues 462–482 (STVVWTSLGILGLVVFLFLLF) traverse the membrane as a helical segment.

Belongs to the paxM FAD-dependent monooxygenase family. It depends on FAD as a cofactor.

The protein resides in the membrane. Its pathway is secondary metabolite biosynthesis; terpenoid biosynthesis. In terms of biological role, FAD-dependent monooxygenase; part of the cluster A that mediates the biosynthesis of chevalone E and its oxidized derivatives that possess a unique five-membered lactone ring and can synergistically enhance the cytotoxicity of doxorubicin (DOX) in breast cancer cells. Within the pathway, cle3 takes part to the biosynthesis of the molecular scaffold by catalyzing the formation of an (S)-epoxide ring at the terminal olefin of the geranylgeranyl group. The molecular scaffold is commonly biosynthesized by a series of enzymes including the non-reducing polyketide synthase (NR-PKS) cle1 that produces the alpha-pyrone triacetic acid lactone (TAL); The membrane-bound prenyltransferase cle5 that accepts TAL as its substrate to perform a C-3 geranylgeranylation reaction, in which the pathway-dedicated GGPS cle6 is required to provide GGPP, the other substrate of cle5; the FAD-dependent monooxygenase Cle3 that forms an (S)-epoxide ring at the terminal olefin of the geranylgeranyl group; and the terpene cyclase Cle7 that catalyzes the cyclization of the prenyl group that yields the pentacyclic pathway intermediate chevalone E. Chevalone E can derivatize into seven new oxidized analogs by the cytochrome P450 monooxygenases cle2 (acting at C-20) and cle4 (acting at C-11 and C-12). This chain is FAD-dependent monooxygenase cle3, found in Aspergillus versicolor.